Here is an 85-residue protein sequence, read N- to C-terminus: MPKLEMMLLVLLILPLCYIDAVGPPPPWNMEDEIIEHWQKLHCHEISDLTPWILCSPEPLCGGKGCCAQEVCDCSGPVCTCPPCL.

Positions 1 to 21 are cleaved as a signal peptide; it reads MPKLEMMLLVLLILPLCYIDA. The propeptide occupies 22–40; it reads VGPPPPWNMEDEIIEHWQK.

This sequence belongs to the conotoxin D superfamily. Post-translationally, contains 5 disulfide bonds. As to expression, expressed by the venom duct.

Its subcellular location is the secreted. Its function is as follows. Probable neurotoxin. This is Conotoxin Im28.1 from Conus imperialis (Imperial cone).